The sequence spans 682 residues: Heat shock 70 kDa protein, mitochondrial (682 aa).

The N-terminal 57 residues, 1-57, are a transit peptide targeting the mitochondrion; that stretch reads MATAALLRSLRRREFATSSISAYRTLASNTKPSWCPSLVGAKWAGLARPFSSKPAGN. The segment at 649–682 is disordered; sequence GEHMAGGSSGGASGGGGAQGGDQPPEAEYEEVKK. A compositionally biased stretch (gly residues) spans 655-668; the sequence is GSSGGASGGGGAQG. A compositionally biased stretch (acidic residues) spans 673-682; sequence PEAEYEEVKK.

The protein belongs to the heat shock protein 70 family.

It localises to the mitochondrion. This is Heat shock 70 kDa protein, mitochondrial (HSP68) from Solanum tuberosum (Potato).